The following is a 278-amino-acid chain: MALKQFNPTSPGRRQLVLVDKSELHKGRPEKSLVEGLTKSGGRGGNGRISVRFRGGGAKRLYRVIDFKRRKFDVPATVERLEYDPNRSAFIALVKYEDGELAYILAPQRLKVGDQVIAAEKADVKPGNAMPLRGMPIGTIIHNVELKPLKGGQIARSAGTYAQLVGRDAGYAQIRLNSGELRMVQDGCMATVGAVSNPDHMNESLGKAGRSRHKGRRPHVRGVAMNPIDHPHGGGEGRTSGGRHPVTPWGKPTKGRKTRKNKATDKFIIRSRHARKAR.

Residues 222 to 264 (GVAMNPIDHPHGGGEGRTSGGRHPVTPWGKPTKGRKTRKNKAT) are disordered.

This sequence belongs to the universal ribosomal protein uL2 family. Part of the 50S ribosomal subunit. Forms a bridge to the 30S subunit in the 70S ribosome.

One of the primary rRNA binding proteins. Required for association of the 30S and 50S subunits to form the 70S ribosome, for tRNA binding and peptide bond formation. It has been suggested to have peptidyltransferase activity; this is somewhat controversial. Makes several contacts with the 16S rRNA in the 70S ribosome. This is Large ribosomal subunit protein uL2 from Phenylobacterium zucineum (strain HLK1).